A 404-amino-acid chain; its full sequence is Cysteine desulfurase IscS (404 aa).

Pyridoxal 5'-phosphate-binding positions include 75–76 (AT), asparagine 155, glutamine 183, and 203–205 (SAH). The residue at position 206 (lysine 206) is an N6-(pyridoxal phosphate)lysine. Threonine 243 serves as a coordination point for pyridoxal 5'-phosphate. The active-site Cysteine persulfide intermediate is cysteine 328. Cysteine 328 contributes to the [2Fe-2S] cluster binding site.

This sequence belongs to the class-V pyridoxal-phosphate-dependent aminotransferase family. NifS/IscS subfamily. Homodimer. Forms a heterotetramer with IscU, interacts with other sulfur acceptors. It depends on pyridoxal 5'-phosphate as a cofactor.

The protein localises to the cytoplasm. It carries out the reaction (sulfur carrier)-H + L-cysteine = (sulfur carrier)-SH + L-alanine. It participates in cofactor biosynthesis; iron-sulfur cluster biosynthesis. Its function is as follows. Master enzyme that delivers sulfur to a number of partners involved in Fe-S cluster assembly, tRNA modification or cofactor biosynthesis. Catalyzes the removal of elemental sulfur atoms from cysteine to produce alanine. Functions as a sulfur delivery protein for Fe-S cluster synthesis onto IscU, an Fe-S scaffold assembly protein, as well as other S acceptor proteins. The chain is Cysteine desulfurase IscS from Shewanella loihica (strain ATCC BAA-1088 / PV-4).